Consider the following 292-residue polypeptide: ATP synthase gamma chain (292 aa).

The protein belongs to the ATPase gamma chain family. In terms of assembly, F-type ATPases have 2 components, CF(1) - the catalytic core - and CF(0) - the membrane proton channel. CF(1) has five subunits: alpha(3), beta(3), gamma(1), delta(1), epsilon(1). CF(0) has three main subunits: a, b and c.

The protein localises to the cell inner membrane. In terms of biological role, produces ATP from ADP in the presence of a proton gradient across the membrane. The gamma chain is believed to be important in regulating ATPase activity and the flow of protons through the CF(0) complex. This is ATP synthase gamma chain from Maridesulfovibrio salexigens (strain ATCC 14822 / DSM 2638 / NCIMB 8403 / VKM B-1763) (Desulfovibrio salexigens).